We begin with the raw amino-acid sequence, 131 residues long: Small ribosomal subunit protein uS8 (131 aa).

Belongs to the universal ribosomal protein uS8 family. Part of the 30S ribosomal subunit. Contacts proteins S5 and S12.

In terms of biological role, one of the primary rRNA binding proteins, it binds directly to 16S rRNA central domain where it helps coordinate assembly of the platform of the 30S subunit. The sequence is that of Small ribosomal subunit protein uS8 from Dictyoglomus thermophilum (strain ATCC 35947 / DSM 3960 / H-6-12).